A 152-amino-acid chain; its full sequence is MFRGATMVNLDSKGRLAVPTRYRELLNEQSEGQMVCTIDLHQPCLLLYPLPEWEIIEQKLSRLSSMNPAERRVQRLLLGHASECQMDSAGRLLLATTLRQHAGLTKEVMLVGQFNKFELWDEQTWYQQVKDDIDAEQSTQEPLSERLQDLSL.

2 SpoVT-AbrB domains span residues 5–52 (ATMV…PLPE) and 81–124 (ASEC…DEQT).

The protein belongs to the MraZ family. As to quaternary structure, forms oligomers.

It localises to the cytoplasm. Its subcellular location is the nucleoid. Its function is as follows. Negatively regulates its own expression and that of the subsequent genes in the proximal part of the division and cell wall (dcw) gene cluster. Acts by binding directly to DNA. May also regulate the expression of genes outside the dcw cluster. This Serratia proteamaculans (strain 568) protein is Transcriptional regulator MraZ.